We begin with the raw amino-acid sequence, 249 residues long: 23S rRNA (guanosine-2'-O-)-methyltransferase RlmB (249 aa).

Residues Gly200, Ile220, and Leu229 each contribute to the S-adenosyl-L-methionine site.

Belongs to the class IV-like SAM-binding methyltransferase superfamily. RNA methyltransferase TrmH family. RlmB subfamily.

The protein localises to the cytoplasm. It carries out the reaction guanosine(2251) in 23S rRNA + S-adenosyl-L-methionine = 2'-O-methylguanosine(2251) in 23S rRNA + S-adenosyl-L-homocysteine + H(+). Specifically methylates the ribose of guanosine 2251 in 23S rRNA. The polypeptide is 23S rRNA (guanosine-2'-O-)-methyltransferase RlmB (Xanthomonas campestris pv. campestris (strain ATCC 33913 / DSM 3586 / NCPPB 528 / LMG 568 / P 25)).